The primary structure comprises 98 residues: UPF0235 protein APJL_1398 (98 aa).

Belongs to the UPF0235 family.

This Actinobacillus pleuropneumoniae serotype 3 (strain JL03) protein is UPF0235 protein APJL_1398.